The chain runs to 422 residues: Serine--tRNA ligase (422 aa).

An L-serine-binding site is contributed by 229 to 231 (TAE). Residue 260–262 (RKE) coordinates ATP. Glutamate 283 is an L-serine binding site. ATP is bound at residue 347–350 (EISS). Serine 383 provides a ligand contact to L-serine.

Belongs to the class-II aminoacyl-tRNA synthetase family. Type-1 seryl-tRNA synthetase subfamily. Homodimer. The tRNA molecule binds across the dimer.

It localises to the cytoplasm. It carries out the reaction tRNA(Ser) + L-serine + ATP = L-seryl-tRNA(Ser) + AMP + diphosphate + H(+). The catalysed reaction is tRNA(Sec) + L-serine + ATP = L-seryl-tRNA(Sec) + AMP + diphosphate + H(+). The protein operates within aminoacyl-tRNA biosynthesis; selenocysteinyl-tRNA(Sec) biosynthesis; L-seryl-tRNA(Sec) from L-serine and tRNA(Sec): step 1/1. Catalyzes the attachment of serine to tRNA(Ser). Is also able to aminoacylate tRNA(Sec) with serine, to form the misacylated tRNA L-seryl-tRNA(Sec), which will be further converted into selenocysteinyl-tRNA(Sec). The polypeptide is Serine--tRNA ligase (Citrifermentans bemidjiense (strain ATCC BAA-1014 / DSM 16622 / JCM 12645 / Bem) (Geobacter bemidjiensis)).